A 788-amino-acid chain; its full sequence is Endonuclease MutS2 (788 aa).

Residue 332-339 (GPNTGGKT) participates in ATP binding. One can recognise a Smr domain in the interval 713-788 (VDLRGMDAEE…GTGVTVVELK (76 aa)).

This sequence belongs to the DNA mismatch repair MutS family. MutS2 subfamily. In terms of assembly, homodimer. Binds to stalled ribosomes, contacting rRNA.

Its function is as follows. Endonuclease that is involved in the suppression of homologous recombination and thus may have a key role in the control of bacterial genetic diversity. In terms of biological role, acts as a ribosome collision sensor, splitting the ribosome into its 2 subunits. Detects stalled/collided 70S ribosomes which it binds and splits by an ATP-hydrolysis driven conformational change. Acts upstream of the ribosome quality control system (RQC), a ribosome-associated complex that mediates the extraction of incompletely synthesized nascent chains from stalled ribosomes and their subsequent degradation. Probably generates substrates for RQC. The chain is Endonuclease MutS2 from Clostridium botulinum (strain Langeland / NCTC 10281 / Type F).